The following is a 203-amino-acid chain: Dephospho-CoA kinase (203 aa).

Positions 4–203 (VIGITGGIAT…EEGYIQSESE (200 aa)) constitute a DPCK domain. 12–17 (ATGKST) contributes to the ATP binding site.

This sequence belongs to the CoaE family.

The protein localises to the cytoplasm. It carries out the reaction 3'-dephospho-CoA + ATP = ADP + CoA + H(+). The protein operates within cofactor biosynthesis; coenzyme A biosynthesis; CoA from (R)-pantothenate: step 5/5. In terms of biological role, catalyzes the phosphorylation of the 3'-hydroxyl group of dephosphocoenzyme A to form coenzyme A. The sequence is that of Dephospho-CoA kinase from Staphylococcus epidermidis (strain ATCC 35984 / DSM 28319 / BCRC 17069 / CCUG 31568 / BM 3577 / RP62A).